The chain runs to 241 residues: 15,16-dihydrobiliverdin:ferredoxin oxidoreductase (241 aa).

The protein belongs to the HY2 family.

The enzyme catalyses 15,16-dihydrobiliverdin + oxidized 2[4Fe-4S]-[ferredoxin] = biliverdin IXalpha + reduced 2[4Fe-4S]-[ferredoxin] + 2 H(+). Catalyzes the two-electron reduction of biliverdin IX-alpha at the C15 methine bridge. This is 15,16-dihydrobiliverdin:ferredoxin oxidoreductase (pebA) from Prochlorococcus marinus (strain SARG / CCMP1375 / SS120).